Reading from the N-terminus, the 120-residue chain is Photosystem II extrinsic protein U (120 aa).

The signal sequence occupies residues methionine 1 to alanine 29.

It belongs to the PsbU family. PSII is composed of 1 copy each of membrane proteins PsbA, PsbB, PsbC, PsbD, PsbE, PsbF, PsbH, PsbI, PsbJ, PsbK, PsbL, PsbM, PsbT, PsbX, PsbY, Psb30/Ycf12, peripheral proteins PsbO, CyanoQ (PsbQ), PsbU, PsbV and a large number of cofactors. It forms dimeric complexes.

It is found in the cellular thylakoid membrane. Functionally, one of the extrinsic, lumenal subunits of photosystem II (PSII). PSII is a light-driven water plastoquinone oxidoreductase, using light energy to abstract electrons from H(2)O, generating a proton gradient subsequently used for ATP formation. The extrinsic proteins stabilize the structure of photosystem II oxygen-evolving complex (OEC), the ion environment of oxygen evolution and protect the OEC against heat-induced inactivation. In Prochlorococcus marinus (strain MIT 9303), this protein is Photosystem II extrinsic protein U.